The following is a 65-amino-acid chain: Putative beta-neurotoxin RjAa8 (65 aa).

An LCN-type CS-alpha/beta domain is found at 1-64 (KEGYPMGRDG…VWDSSTNKCG (64 aa)). 4 disulfides stabilise this stretch: Cys-11–Cys-63, Cys-15–Cys-37, Cys-22–Cys-44, and Cys-26–Cys-46.

Belongs to the long (4 C-C) scorpion toxin superfamily. Sodium channel inhibitor family. Beta subfamily. As to expression, expressed by the venom gland.

The protein localises to the secreted. Its function is as follows. Beta toxins bind voltage-independently at site-4 of sodium channels (Nav) and shift the voltage of activation toward more negative potentials thereby affecting sodium channel activation and promoting spontaneous and repetitive firing. In Rhopalurus junceus (Caribbean blue scorpion), this protein is Putative beta-neurotoxin RjAa8.